A 560-amino-acid chain; its full sequence is Thermosome subunit 1 (560 aa).

The segment at 525–550 is disordered; it reads LSGGQTGSDDDDGGAPGGMGGGMGGM. Positions 538 to 550 are enriched in gly residues; the sequence is GAPGGMGGGMGGM.

Belongs to the TCP-1 chaperonin family. The thermosome or CCT complex is a oligomeric complex of two octameric double-ring structures; the complex is probably a heterooligomer of CCT1, CCT2 and CCT3 with yet unknown stoichiometry.

Molecular chaperone that assists in the folding or refolding of nascent or denatured proteins along with ATP hydrolysis. ATPase activity is highest in thermosome assemblies containing CCT1:CCT2, followed by assemblies containing CCT1:CCT2:CCT3. Required for thermosome ATPase activity. Not required for growth. This chain is Thermosome subunit 1 (cct1), found in Haloferax volcanii (strain ATCC 29605 / DSM 3757 / JCM 8879 / NBRC 14742 / NCIMB 2012 / VKM B-1768 / DS2) (Halobacterium volcanii).